Reading from the N-terminus, the 460-residue chain is V-type ATP synthase beta chain (460 aa).

It belongs to the ATPase alpha/beta chains family.

Its function is as follows. Produces ATP from ADP in the presence of a proton gradient across the membrane. The V-type beta chain is a regulatory subunit. The protein is V-type ATP synthase beta chain of Thermotoga neapolitana (strain ATCC 49049 / DSM 4359 / NBRC 107923 / NS-E).